Here is a 585-residue protein sequence, read N- to C-terminus: Bifunctional lycopene cyclase/phytoene synthase (585 aa).

Residues 1-243 (MGFDYAIVHV…IVFGQLAFDN (243 aa)) are lycopene beta-cyclase. 7 consecutive transmembrane segments (helical) span residues 3-23 (FDYAIVHVKYTIPPAVLLTLL), 35-55 (KVLFLVTVAVTATIPWDSYLI), 75-97 (IPLEEVFFFFIQTYNTTLLYLIL), 123-141 (LAGQLFLVGATVWAGLRVH), 151-171 (LIVVWAAPIILLQWTLAYQFI), 173-193 (GLPWTNTVLPIAIPTLYLWLV), and 221-241 (IEEALFFFVTNTLIVFGQLAF). Residues 250-585 (TFPALFPKPP…AWRTLNKSIA (336 aa)) are phytoene synthase.

This sequence in the N-terminal section; belongs to the lycopene beta-cyclase family. The protein in the C-terminal section; belongs to the phytoene/squalene synthase family.

It localises to the membrane. It catalyses the reaction all-trans-lycopene = gamma-carotene. The enzyme catalyses gamma-carotene = all-trans-beta-carotene. It carries out the reaction 2 (2E,6E,10E)-geranylgeranyl diphosphate = 15-cis-phytoene + 2 diphosphate. It participates in carotenoid biosynthesis; beta-carotene biosynthesis. The protein operates within carotenoid biosynthesis; phytoene biosynthesis; all-trans-phytoene from geranylgeranyl diphosphate: step 1/1. Bifunctional enzyme that catalyzes the reactions from geranylgeranyl diphosphate to phytoene (phytoene synthase) and lycopene to beta-carotene via the intermediate gamma-carotene (lycopene cyclase). The polypeptide is Bifunctional lycopene cyclase/phytoene synthase (Phaeosphaeria nodorum (strain SN15 / ATCC MYA-4574 / FGSC 10173) (Glume blotch fungus)).